The chain runs to 291 residues: Elongation factor Ts (291 aa).

Positions 79–82 (TDFV) are involved in Mg(2+) ion dislocation from EF-Tu.

It belongs to the EF-Ts family.

Its subcellular location is the cytoplasm. Functionally, associates with the EF-Tu.GDP complex and induces the exchange of GDP to GTP. It remains bound to the aminoacyl-tRNA.EF-Tu.GTP complex up to the GTP hydrolysis stage on the ribosome. The protein is Elongation factor Ts of Stenotrophomonas maltophilia (strain K279a).